The primary structure comprises 704 residues: Chloride intracellular channel protein 6 (704 aa).

The segment covering 1–13 (MAEAAEPEGVAPG) has biased composition (low complexity). A disordered region spans residues 1–446 (MAEAAEPEGV…EDGEASEPRA (446 aa)). Over residues 39 to 48 (EGPEGSEGAE) the composition is skewed to acidic residues. S44 bears the Phosphoserine mark. Positions 67–83 (RGPEAEARGTRGAHGET) are enriched in basic and acidic residues. The segment covering 90–100 (PEGAEVPQGGE) has biased composition (low complexity). A compositionally biased stretch (basic and acidic residues) spans 121-147 (PRGEAQREPEDSAAPERQEEAEQRPEV). 13 consecutive repeat copies span residues 157 to 166 (GDSVDAEGPL), 167 to 176 (GDNIEAEGPA), 177 to 186 (GDSVEAEGRV), 187 to 196 (GDSVDAEGPA), 197 to 206 (GDSVDAEGPL), 207 to 216 (GDNIQAEGPA), 217 to 226 (GDSVDAEGRV), 227 to 236 (GDSVDAEGPA), 237 to 246 (GDSVDAEGRV), 247 to 256 (GDSVEAGDPA), 257 to 266 (GDGVEAGVPA), 267 to 276 (GDSVEAEGPA), and 277 to 286 (GDSMDAEGPA). Residues 157–282 (GDSVDAEGPL…EGPAGDSMDA (126 aa)) form a 13 X 10 AA tandem repeat of G-D-[SNG]-[VIM]-[DEQ]-A-[EAG]-[GDVE]-[PRG]-[LAVP] region. Over residues 295–306 (EPQQSGDGSLSP) the composition is skewed to polar residues. Composition is skewed to basic and acidic residues over residues 350 to 360 (ARADAGEDRVG) and 371 to 385 (EERR…REEE). Residues S397 and S442 each carry the phosphoserine modification. Residues 434-446 (GRREDGEASEPRA) are compositionally biased toward basic and acidic residues. The G-site signature appears at 487-490 (CPFS). The helical transmembrane segment at 489 to 509 (FSQRLFMILWLKGVIFNVTTV) threads the bilayer. The GST C-terminal domain maps to 556 to 704 (YPKLGTQHPE…AYSDVAKRMK (149 aa)).

The protein belongs to the chloride channel CLIC family. In terms of assembly, monomer (soluble state). Interacts with dopamine receptors DRD2, DRD3 and DRD4. Phosphorylated. As to expression, expressed in brain, placenta, pancreas, liver, lung, heart, kidney, liver, spleen, soleus muscle, and brown fat.

Its subcellular location is the cytoplasm. It localises to the cell membrane. It carries out the reaction chloride(in) = chloride(out). Its activity is regulated as follows. Channel activity is redox- and pH-regulated. Inhibited by IAA-94. Functionally, in the soluble state, catalyzes glutaredoxin-like thiol disulfide exchange reactions with reduced glutathione as electron donor. Can insert into membranes and form voltage-dependent chloride-selective channels. The channel opens upon membrane depolarization at positive voltages and closes at negative membrane voltages. May play a critical role in water-secreting cells, possibly through the regulation of chloride ion transport. The protein is Chloride intracellular channel protein 6 of Homo sapiens (Human).